A 295-amino-acid polypeptide reads, in one-letter code: Glutamyl-Q tRNA(Asp) synthetase (295 aa).

Residues 5-9 (RFAPS) and Glu-41 each bind L-glutamate. The 'HIGH' region motif lies at 8 to 18 (PSPTGLLHIGS). Cys-97, Cys-99, Tyr-117, and Cys-121 together coordinate Zn(2+). Residues Tyr-178 and Arg-196 each coordinate L-glutamate. The 'KMSKS' region motif lies at 234–238 (KWSKQ). Lys-237 lines the ATP pocket.

This sequence belongs to the class-I aminoacyl-tRNA synthetase family. GluQ subfamily. Zn(2+) is required as a cofactor.

In terms of biological role, catalyzes the tRNA-independent activation of glutamate in presence of ATP and the subsequent transfer of glutamate onto a tRNA(Asp). Glutamate is transferred on the 2-amino-5-(4,5-dihydroxy-2-cyclopenten-1-yl) moiety of the queuosine in the wobble position of the QUC anticodon. This is Glutamyl-Q tRNA(Asp) synthetase from Neisseria meningitidis serogroup C (strain 053442).